Consider the following 233-residue polypeptide: Lysine exporter LysE (233 aa).

Residues 1–2 lie on the Cytoplasmic side of the membrane; it reads ME. Residues 3 to 23 traverse the membrane as a helical segment; that stretch reads IFITGLLLGASLLLSIGPQNV. Residues 24–65 are Periplasmic-facing; sequence LVIKQGIKREGLIAVLLVCLISDVFLFIAGTLGVDLLSNAAP. The helical transmembrane segment at 66 to 86 threads the bilayer; sequence IVLDIMRWGGIAYLLWFAVMA. Topologically, residues 87-143 are cytoplasmic; it reads AKDAMTNKVEAPQIIEETEPTVPDDTPLGGSAVATDTRNRVRVEVSVDKQRVWVKPM. A helical membrane pass occupies residues 144–164; it reads LMAIVLTWLNPNAYLDAFVFI. Over 165 to 176 the chain is Periplasmic; sequence GGVGAQYGDTGR. The helical transmembrane segment at 177-197 threads the bilayer; that stretch reads WIFAAGAFAASLIWFPLVGFG. The Cytoplasmic portion of the chain corresponds to 198-212; the sequence is AAALSRPLSSPKVWR. The chain crosses the membrane as a helical span at residues 213–233; sequence WINVVVAVVMTALAIKLMLMG.

The protein belongs to the LysE/ArgO transporter (TC 2.A.75) family.

The protein localises to the cell inner membrane. With respect to regulation, transport process is modulated by three forces: the membrane potential, the chemical potential of lysine, and the proton gradient. Strongly inhibited by CCCP and valinomycin. Functionally, catalyzes the efflux of L-lysine. Can also export L-arginine and L-citrulline. The lysEG system prevents bacteriostasis due to elevated L-lysine or L-arginine concentrations that arise during growth in the presence of peptides or in mutants possessing a deregulated biosynthesis pathway. In vitro, can also export D-lysine during biotechnological production of D-amino acids. This chain is Lysine exporter LysE, found in Corynebacterium glutamicum (strain ATCC 13032 / DSM 20300 / JCM 1318 / BCRC 11384 / CCUG 27702 / LMG 3730 / NBRC 12168 / NCIMB 10025 / NRRL B-2784 / 534).